The chain runs to 265 residues: Secreted RxLR effector protein 16 (265 aa).

The first 19 residues, 1–19 (MRGAFYIAIALLIVRSRTA), serve as a signal peptide directing secretion. The short motif at 46 to 61 (RYLRGGLALSATNEER) is the RxLR-dEER element. Residues N170, N219, and N240 are each glycosylated (N-linked (GlcNAc...) asparagine).

The protein belongs to the RxLR effector family. In terms of processing, N-glycosylated. The putative N-glycosylation site at position 240 is essential for cell death-inducing activity.

The protein localises to the secreted. It localises to the host nucleus. In terms of biological role, effector that acts as an elicitor that induces cell death and promotes ROS accumulation in Nicotian benthamiana. RxLR16-triggered cell death is dependent on SGT1, HSP90 and RAR1, but independent of the somatic embryogenesis receptor-like kinase SERK3/BAK1, indicating that it acts independently of the detection of cell surface pattern recognition receptors. Enhances the expressional levels of defense-associated genes involved in the salicylic acid-, jasmonate acid-, and ethylene-mediated signal transduction, resulting in disease resistance. However, as some other Plasmopara viticola RxLR effectors including RxLR1, RxLR10, RxLR30 and RxLR25, can suppress defense responses and disease resistance induced by RxLR16, it may not trigger host cell death or immune responses during physiological infection under natural conditions. This Plasmopara viticola (Downy mildew of grapevine) protein is Secreted RxLR effector protein 16.